The primary structure comprises 91 residues: Large ribosomal subunit protein eL37 (91 aa).

4 residues coordinate Zn(2+): C19, C22, C34, and C37. The C4-type zinc finger occupies 19–37 (CRRCGKSSFHIQKKTCASC).

It belongs to the eukaryotic ribosomal protein eL37 family. It depends on Zn(2+) as a cofactor.

Its function is as follows. Binds to the 23S rRNA. The protein is Large ribosomal subunit protein eL37 (rpl37) of Dictyostelium discoideum (Social amoeba).